A 182-amino-acid polypeptide reads, in one-letter code: Large ribosomal subunit protein uL6 (182 aa).

Belongs to the universal ribosomal protein uL6 family. As to quaternary structure, part of the 50S ribosomal subunit.

Functionally, this protein binds to the 23S rRNA, and is important in its secondary structure. It is located near the subunit interface in the base of the L7/L12 stalk, and near the tRNA binding site of the peptidyltransferase center. This is Large ribosomal subunit protein uL6 from Dehalococcoides mccartyi (strain CBDB1).